A 320-amino-acid chain; its full sequence is MSGPMRSYLDFEKPVAELDSKIDELRTLAASGSDIHEEIEKIEEKAQQALQDLYAALTPWQKTQVARHPQRPHCVDYIEGLIAEFTPLAGDRKFGDDEALVGGFGRFRGEAVCVIGQEKGSTTETRLRHNFGMARPEGYRKAVRLMEMADRFDLPVLSLVDTAGAYPGIGAEERGQAEAIARSTDACLQLGVPNVALVIGEGGSGGAIAIATANKVLMLEHAVYSVISPEAASSILWRDGTKAQEAANSMKITAQDLLKFGVIDQILAEPKGGAHRDPEAMIATAGDAIAAAFAELKGQGRDAIRAKRRQKFLDIGRKLA.

In terms of domain architecture, CoA carboxyltransferase C-terminal spans 41-295 (KIEEKAQQAL…GDAIAAAFAE (255 aa)).

This sequence belongs to the AccA family. In terms of assembly, acetyl-CoA carboxylase is a heterohexamer composed of biotin carboxyl carrier protein (AccB), biotin carboxylase (AccC) and two subunits each of ACCase subunit alpha (AccA) and ACCase subunit beta (AccD).

The protein localises to the cytoplasm. It catalyses the reaction N(6)-carboxybiotinyl-L-lysyl-[protein] + acetyl-CoA = N(6)-biotinyl-L-lysyl-[protein] + malonyl-CoA. The protein operates within lipid metabolism; malonyl-CoA biosynthesis; malonyl-CoA from acetyl-CoA: step 1/1. Component of the acetyl coenzyme A carboxylase (ACC) complex. First, biotin carboxylase catalyzes the carboxylation of biotin on its carrier protein (BCCP) and then the CO(2) group is transferred by the carboxyltransferase to acetyl-CoA to form malonyl-CoA. The polypeptide is Acetyl-coenzyme A carboxylase carboxyl transferase subunit alpha (Rhodopseudomonas palustris (strain ATCC BAA-98 / CGA009)).